A 742-amino-acid chain; its full sequence is Ferric enterobactin receptor PirA (742 aa).

The N-terminal stretch at 1 to 28 (MYPQFRRGHLAAAVLFASSSLLGGQALA) is a signal peptide. One can recognise a TBDR plug domain in the interval 57–184 (QELKQAPGVS…AGGVVNIITK (128 aa)). Disordered regions lie at residues 91–112 (GVNLTGNSSSGQRGNNRQIDIR) and 409–435 (SSLKQGFVGSDSLPGTPAAGSRSPKSK). The span at 94 to 108 (LTGNSSSGQRGNNRQ) shows a compositional bias: polar residues. The region spanning 189-742 (RLRGSMTVFT…AYYVSMTTSF (554 aa)) is the TBDR beta-barrel domain. The cysteines at positions 516 and 525 are disulfide-linked. A TonB C-terminal box motif is present at residues 725-742 (ATYNEPGRAYYVSMTTSF).

The protein belongs to the TonB-dependent receptor family.

It localises to the cell outer membrane. Its function is as follows. Specific receptor for the siderophore ferric enterobactin. Probably involved in the transport of siderophores, including host catecholamines such as L-DOPA. The chain is Ferric enterobactin receptor PirA from Pseudomonas aeruginosa (strain ATCC 15692 / DSM 22644 / CIP 104116 / JCM 14847 / LMG 12228 / 1C / PRS 101 / PAO1).